The sequence spans 207 residues: Alpha-1-acid glycoprotein 1 (207 aa).

The first 18 residues, 1-18 (MALHTVLIILSLLPMLEA), serve as a signal peptide directing secretion. The residue at position 19 (Q19) is a Pyrrolidone carboxylic acid. 5 N-linked (GlcNAc...) asparagine glycosylation sites follow: N25, N34, N76, N94, and N104. An intrachain disulfide couples C91 to C184.

This sequence belongs to the calycin superfamily. Lipocalin family.

Its subcellular location is the secreted. Functionally, functions as a transport protein in the blood stream. Binds various ligands in the interior of its beta-barrel domain. Appears to function in modulating the activity of the immune system during the acute-phase reaction. In Mus musculus (Mouse), this protein is Alpha-1-acid glycoprotein 1 (Orm1).